The chain runs to 312 residues: Olfactory receptor 10C1 (312 aa).

Residues 1 to 24 are Extracellular-facing; that stretch reads MSANTSMVTEFLLLGFSHLADLQG. Residue Asn-4 is glycosylated (N-linked (GlcNAc...) asparagine). Residues 25–45 traverse the membrane as a helical segment; the sequence is LLFSVFLTIYLLTVAGNFLIV. Topologically, residues 46-53 are cytoplasmic; sequence VLVSTDAA. The chain crosses the membrane as a helical span at residues 54–74; it reads LQSPMYFFLRTLSALEIGYTS. At 75–98 the chain is on the extracellular side; it reads VTVPLLLHHLLTGRRHISRSGCAL. Cys-96 and Cys-188 are oxidised to a cystine. Residues 99–119 form a helical membrane-spanning segment; the sequence is QMFFFLFFGATECCLLAAMAY. The Cytoplasmic segment spans residues 120–138; the sequence is DRYAAICEPLRYPLLLSHR. Residues 139 to 159 traverse the membrane as a helical segment; it reads VCLQLAGSAWACGVLVGLGHT. Over 160–196 the chain is Extracellular; that stretch reads PFIFSLPFCGPNTIPQFFCEIQPVLQLVCGDTSLNEL. The chain crosses the membrane as a helical span at residues 197–216; the sequence is QIILATALLILCPFGLILGS. Over 217–236 the chain is Cytoplasmic; that stretch reads YGRILVTIFRIPSVAGRRKA. The chain crosses the membrane as a helical span at residues 237 to 257; it reads FSTCSSHLIMVSLFYGTALFI. The Extracellular segment spans residues 258–270; that stretch reads YIRPKASYDPATD. The helical transmembrane segment at 271-291 threads the bilayer; it reads PLVSLFYAVVTPILNPIIYSL. Residues 292–312 are Cytoplasmic-facing; sequence RNTEVKAALKRTIQKTVPMEI.

Belongs to the G-protein coupled receptor 1 family.

The protein resides in the cell membrane. Functionally, odorant receptor. This is Olfactory receptor 10C1 (OR10C1) from Homo sapiens (Human).